The sequence spans 260 residues: Carbonic anhydrase 2 (260 aa).

An N-acetylserine modification is found at Ser2. At Ser2 the chain carries Phosphoserine. Residues 3–259 (HHWGYGEHNG…LKNRQVRVFP (257 aa)) form the Alpha-carbonic anhydrase domain. His64 acts as the Proton donor/acceptor in catalysis. The Zn(2+) site is built by His94, His96, and His119. Phosphoserine is present on residues Ser165 and Ser172. 198-199 (TN) is a binding site for substrate.

Belongs to the alpha-carbonic anhydrase family. In terms of assembly, interacts with SLC4A4 and SLC26A6. Interaction with SLC4A7 regulates SLC4A7 transporter activity. Requires Zn(2+) as cofactor.

It localises to the cytoplasm. The protein resides in the cell membrane. It carries out the reaction hydrogencarbonate + H(+) = CO2 + H2O. The enzyme catalyses urea = cyanamide + H2O. Its activity is regulated as follows. Inhibited by acetazolamide. Catalyzes the reversible hydration of carbon dioxide. Can also hydrate cyanamide to urea. Involved in the regulation of fluid secretion into the anterior chamber of the eye. Essential for bone resorption and osteoclast differentiation. Contributes to intracellular pH regulation in the duodenal upper villous epithelium during proton-coupled peptide absorption. Stimulates the chloride-bicarbonate exchange activity of SLC26A6. This is Carbonic anhydrase 2 (CA2) from Ovis aries (Sheep).